The primary structure comprises 379 residues: MKKAFISVGEISGDNYASQLVKALPDFMWVGITGPKMREAGVETVEKLENISVVGLMEALPKYFKIKETFKRSVEILDKGIDLLVVVDFPGFNLKLLKEAKKRGIKTVYFIAPQVWAWGKGRIPKIAQYTDLLIAIWPFEKEIYTDYISDSFRVEYVGHPILDIIKTEETEESFKEKIGIEKDKKIFGLLPGSRESEVKTLLPILLSSAEIIYRKREDLHFVIPSTPNMEENVKQIAGSKKVPLSVITVKDFRHPSYEVMKHSVFLNVASGTATLETAIFGNPFLLVYKVSPVTFFIGKMLVSIDYLGLPNIIAGREIIKELLQKECNPESIARWSLRYLEDPEVYERTKNDLEKVKKALGEKGAIKRSADLIKELSLS.

Belongs to the LpxB family.

It catalyses the reaction a lipid X + a UDP-2-N,3-O-bis[(3R)-3-hydroxyacyl]-alpha-D-glucosamine = a lipid A disaccharide + UDP + H(+). It functions in the pathway bacterial outer membrane biogenesis; LPS lipid A biosynthesis. Its function is as follows. Condensation of UDP-2,3-diacylglucosamine and 2,3-diacylglucosamine-1-phosphate to form lipid A disaccharide, a precursor of lipid A, a phosphorylated glycolipid that anchors the lipopolysaccharide to the outer membrane of the cell. The polypeptide is Lipid-A-disaccharide synthase (Persephonella marina (strain DSM 14350 / EX-H1)).